The following is a 722-amino-acid chain: Nucleolar protein 10 (722 aa).

WD repeat units lie at residues 50–90, 174–213, 228–266, 270–308, and 310–349; these read EMPT…LKFE, TDAAEMNVCDINPVHQLFAAGTLEGRVDCWDPRVRTRVAA, EGLPSVSALKFNDSLGLAVGTSTGQILVYDLRSSRPLLV, YYGLPIKSLHFHNSLDLVLSADSKIIKMWNKDNGKVFSS, and EPQANINDVCLYPASGMLFTANEDPKMNTFYIPALGPAPR. Coiled-coil stretches lie at residues 423-476 and 511-534; these read EYRK…ANVA and SNVAERRRKSLLEEEQEQAEEEQE. 4 disordered regions span residues 521–555, 572–607, 616–635, and 664–722; these read LLEEEQEQAEEEQEPEGRGSSEDDSSDEDDKGWVQ, SYIQRQERRQQDRNTRLQSSDTHTQQSHGAQKPRFY, RSFSDVSRKQKTHKASLEER, and TEKQ…RRPF. A compositionally biased stretch (acidic residues) spans 523 to 534; sequence EEEQEQAEEEQE. Residues 572–586 are compositionally biased toward basic and acidic residues; sequence SYIQRQERRQQDRNT. Over residues 587 to 600 the composition is skewed to polar residues; it reads RLQSSDTHTQQSHG. Residues 620 to 681 are a coiled coil; that stretch reads DVSRKQKTHK…QAERDHHEER (62 aa). Residues 664-682 show a composition bias toward basic and acidic residues; sequence TEKQRFQQQAERDHHEERR. 2 stretches are compositionally biased toward basic residues: residues 683–693 and 702–722; these read RIRRSAGHLHS and GGGRGRGGGRGRGGGRGRRPF.

The protein belongs to the WD repeat NOL10/ENP2 family.

The protein resides in the nucleus. Its subcellular location is the nucleolus. This chain is Nucleolar protein 10 (nol10), found in Danio rerio (Zebrafish).